The chain runs to 499 residues: Neuronal acetylcholine receptor subunit alpha-3 (499 aa).

The first 25 residues, 1 to 25 (MGVVLLPPPLSMLMLVLMLLPAASA), serve as a signal peptide directing secretion. At 26-244 (SEAEHRLFQY…PLFYTINLII (219 aa)) the chain is on the extracellular side. Asn49 and Asn166 each carry an N-linked (GlcNAc...) asparagine glycan. 2 cysteine pairs are disulfide-bonded: Cys153/Cys167 and Cys217/Cys218. The helical transmembrane segment at 245–260 (PCLLISFLTVLVFYLP) threads the bilayer. Topologically, residues 261-262 (SD) are cytoplasmic. Residues 263–279 (CGEKVTLCISVLLSLTV) form a helical membrane-spanning segment. A Na(+)-binding site is contributed by Glu265. Residues 280–301 (FLLVITETIPSTSLVIPLIGEY) are Extracellular-facing. Residues 302 to 320 (LLFTMIFVTLSIVITVFVL) form a helical membrane-spanning segment. At 321 to 468 (NVHYRTPTTH…QDDWKYVAMV (148 aa)) the chain is on the cytoplasmic side. A phosphoserine mark is found at Ser407 and Ser410. Residues 469–487 (IDRIFLWVFILVCILGTAG) traverse the membrane as a helical segment. Topologically, residues 488-499 (LFLQPLMARDDT) are extracellular.

Belongs to the ligand-gated ion channel (TC 1.A.9) family. Acetylcholine receptor (TC 1.A.9.1) subfamily. Alpha-3/CHRNA3 sub-subfamily. As to quaternary structure, neuronal AChR is composed of two different types of subunits: alpha and beta. CHRNA3/Alpha-3 subunit can be combined to CHRNB2/beta-2 or CHRNB4/beta-4 to give rise to functional receptors. Part of a complex composed of STUB1/CHIP, VCP/p97, CHRNA3, and UBXN2A that modulates the ubiquitination and endoplasmic reticulum-associated degradation (ERAD) of CHRNA3. Within the complex UBXN2A acts as a scaffold protein required for the interaction of CHRNA3 with VCP/p97, this interaction also inhibits CHRNA3 ubiquitination by STUB1/CHIP and subsequently ERAD. Interacts with UBXN2A (via SEP domain), the interaction is required for the interaction of CHRNA3 in the STUB1:VCP:UBXN2A complex. Interacts with RIC3; which is required for proper folding and assembly. Ubiquitinated; by STUB1/CHIP and thereafter degraded by the 26S proteosome complex. Expressed in neurons. Expressed in umbrella cells of urothelium (at protein level).

The protein resides in the synaptic cell membrane. Its subcellular location is the cell membrane. The protein localises to the endoplasmic reticulum. It is found in the golgi apparatus. The catalysed reaction is Ca(2+)(in) = Ca(2+)(out). It catalyses the reaction K(+)(in) = K(+)(out). The enzyme catalyses Na(+)(in) = Na(+)(out). With respect to regulation, activated by a myriad of ligands such as acetylcholine, cytisine, nicotine, choline and epibatidine. The heteropentamer CHRNA3:CHRNB2 activity is blocked by alpha-conotoxins ImI, ImII, PnIA, GID and MII. The heteropentamer CHRNA3:CHRNB4 activity is blocked by the alpha-conotoxin ImI and AuIB. In terms of biological role, component of neuronal acetylcholine receptors (nAChRs) that function as pentameric, ligand-gated cation channels with high calcium permeability among other activities. nAChRs are excitatory neurotrasnmitter receptors formed by a collection of nAChR subunits known to mediate synaptic transmission in the nervous system and the neuromuscular junction. Each nAchR subunit confers differential attributes to channel properties, including activation, deactivation and desensitization kinetics, pH sensitivity, cation permeability, and binding to allosteric modulators. CHRNA3 forms heteropentameric neuronal acetylcholine receptors with CHRNB2 and CHRNB4. CHRNA3:CHRNB4 being predominant in neurons of the autonomic ganglia, it is known as ganglionic nicotinic receptor. CHRNA3:CHRNB4 also plays an important role in the habenulo-interpeduncular tract, modulating the mesolimbic dopamine system and affecting reward circuits and addiction. Hypothalamic CHRNA3:CHRNB4 nAChR activation by nicotine leads to activation of POMC neurons and a decrease in food intake. Also expressed in the urothelium where it modulates reflex bladder activity by increasing intracellular calcium through extracellular influx and basal ATP release. In Rattus norvegicus (Rat), this protein is Neuronal acetylcholine receptor subunit alpha-3 (Chrna3).